Consider the following 543-residue polypeptide: ATP synthase subunit alpha (543 aa).

174–181 (GDRQTGKT) lines the ATP pocket. Positions 521 to 543 (VEKKPDVDKAAPVDQEKIVAGEK) are disordered.

This sequence belongs to the ATPase alpha/beta chains family. As to quaternary structure, F-type ATPases have 2 components, CF(1) - the catalytic core - and CF(0) - the membrane proton channel. CF(1) has five subunits: alpha(3), beta(3), gamma(1), delta(1), epsilon(1). CF(0) has three main subunits: a(1), b(2) and c(9-12). The alpha and beta chains form an alternating ring which encloses part of the gamma chain. CF(1) is attached to CF(0) by a central stalk formed by the gamma and epsilon chains, while a peripheral stalk is formed by the delta and b chains.

Its subcellular location is the cell membrane. It carries out the reaction ATP + H2O + 4 H(+)(in) = ADP + phosphate + 5 H(+)(out). Produces ATP from ADP in the presence of a proton gradient across the membrane. The alpha chain is a regulatory subunit. This is ATP synthase subunit alpha from Bifidobacterium longum (strain DJO10A).